The following is a 293-amino-acid chain: ATP synthase gamma chain (293 aa).

This sequence belongs to the ATPase gamma chain family. In terms of assembly, F-type ATPases have 2 components, CF(1) - the catalytic core - and CF(0) - the membrane proton channel. CF(1) has five subunits: alpha(3), beta(3), gamma(1), delta(1), epsilon(1). CF(0) has three main subunits: a, b and c.

The protein resides in the cell inner membrane. Its function is as follows. Produces ATP from ADP in the presence of a proton gradient across the membrane. The gamma chain is believed to be important in regulating ATPase activity and the flow of protons through the CF(0) complex. This chain is ATP synthase gamma chain, found in Psychrobacter cryohalolentis (strain ATCC BAA-1226 / DSM 17306 / VKM B-2378 / K5).